The sequence spans 97 residues: Putative membrane protein insertion efficiency factor (97 aa).

The tract at residues 68 to 97 is disordered; that stretch reads VPGTELNTAPRSGQACNPTESTHSTTQTRH. The span at 72–97 shows a compositional bias: polar residues; the sequence is ELNTAPRSGQACNPTESTHSTTQTRH.

It belongs to the UPF0161 family.

It is found in the cell inner membrane. In terms of biological role, could be involved in insertion of integral membrane proteins into the membrane. The polypeptide is Putative membrane protein insertion efficiency factor (Marinobacter nauticus (strain ATCC 700491 / DSM 11845 / VT8) (Marinobacter aquaeolei)).